Consider the following 456-residue polypeptide: Exodeoxyribonuclease 7 large subunit (456 aa).

It belongs to the XseA family. In terms of assembly, heterooligomer composed of large and small subunits.

Its subcellular location is the cytoplasm. It carries out the reaction Exonucleolytic cleavage in either 5'- to 3'- or 3'- to 5'-direction to yield nucleoside 5'-phosphates.. Bidirectionally degrades single-stranded DNA into large acid-insoluble oligonucleotides, which are then degraded further into small acid-soluble oligonucleotides. The chain is Exodeoxyribonuclease 7 large subunit from Escherichia coli (strain ATCC 8739 / DSM 1576 / NBRC 3972 / NCIMB 8545 / WDCM 00012 / Crooks).